The primary structure comprises 55 residues: UPF0291 protein CA_C2726 (55 aa).

This sequence belongs to the UPF0291 family.

The protein localises to the cytoplasm. The polypeptide is UPF0291 protein CA_C2726 (Clostridium acetobutylicum (strain ATCC 824 / DSM 792 / JCM 1419 / IAM 19013 / LMG 5710 / NBRC 13948 / NRRL B-527 / VKM B-1787 / 2291 / W)).